The chain runs to 229 residues: Large ribosomal subunit protein uL1 (229 aa).

It belongs to the universal ribosomal protein uL1 family. As to quaternary structure, part of the 50S ribosomal subunit.

In terms of biological role, binds directly to 23S rRNA. The L1 stalk is quite mobile in the ribosome, and is involved in E site tRNA release. Functionally, protein L1 is also a translational repressor protein, it controls the translation of the L11 operon by binding to its mRNA. This is Large ribosomal subunit protein uL1 from Streptococcus agalactiae serotype Ia (strain ATCC 27591 / A909 / CDC SS700).